We begin with the raw amino-acid sequence, 61 residues long: MMTNLNIKLHHGLVNSTPKQRAAAQTLGLNKIGKTVTREDTPALRGQLQVLRHLITVEEAD.

It belongs to the universal ribosomal protein uL30 family. As to quaternary structure, part of the 50S ribosomal subunit.

The polypeptide is Large ribosomal subunit protein uL30 (Bifidobacterium adolescentis (strain ATCC 15703 / DSM 20083 / NCTC 11814 / E194a)).